A 375-amino-acid polypeptide reads, in one-letter code: LIM domain-binding protein 1 (375 aa).

2 disordered regions span residues 248 to 294 (PPAE…TFAL) and 331 to 375 (DAAN…QASQ). Over residues 266–282 (SGGSTMSSGGGNTNNSN) the composition is skewed to low complexity. Positions 300–339 (DVMVVGEPTLMGGEFGDEDERLITRLENTQFDAANGIDDE) constitute an LIM interaction domain (LID) domain.

Belongs to the LDB family. Forms homodimers and heterodimers. Interacts with the LIM domain of LIM/homeobox factor lhx1/lim1, and with lhx3/lim3 and lhx5/lim5. Activates lhx1/lim1 by binding. The stoichiometry of lhx1/lim1 and ldb1 is important for their function and an excess of ldb1 can inhibit lhx1/lim1 function. When bound to lhx1/lim1, escapes degradation by rnf12. The N-terminus interacts with the N-terminal region of rnf12. Post-translationally, undergoes rnf12-mediated ubiquitin-proteasome-dependent degradation. Ubiquitously expressed in the early gastrula before localizing to the dorsal region of the vegetal hemisphere, which contains the Spemann organizer. Expressed in the CNS, pronephros and tail bud in neurula and tail-bud stage embryos. Expressed in multiple adult tissues including brain, heart, lung, stomach, intestine, liver, spleen, kidney, ovary, muscle and skin.

The protein resides in the nucleus. Functionally, binds to the LIM domain of a wide variety of LIM domain-containing transcription factors. Acts as a coactivator together with otx2 to stimulate lhx1/lim1-mediated activation of the gsc promoter in the Spemann organizer. Acts synergistically with lhx1/lim1 and ssbp in axis formation. The protein is LIM domain-binding protein 1 (ldb1) of Xenopus laevis (African clawed frog).